The primary structure comprises 217 residues: Pyridoxine/pyridoxamine 5'-phosphate oxidase (217 aa).

Residues 66-71 (RMVLLK), 81-82 (FT), Arg-87, Lys-88, and Gln-110 contribute to the FMN site. Lys-71 is a substrate binding site. Tyr-128, Arg-132, and Ser-136 together coordinate substrate. FMN-binding positions include 145–146 (QS) and Trp-190. 196–198 (RLH) lines the substrate pocket. Arg-200 is a binding site for FMN.

Belongs to the pyridoxamine 5'-phosphate oxidase family. In terms of assembly, homodimer. Requires FMN as cofactor.

The catalysed reaction is pyridoxamine 5'-phosphate + O2 + H2O = pyridoxal 5'-phosphate + H2O2 + NH4(+). It carries out the reaction pyridoxine 5'-phosphate + O2 = pyridoxal 5'-phosphate + H2O2. The protein operates within cofactor metabolism; pyridoxal 5'-phosphate salvage; pyridoxal 5'-phosphate from pyridoxamine 5'-phosphate: step 1/1. Its pathway is cofactor metabolism; pyridoxal 5'-phosphate salvage; pyridoxal 5'-phosphate from pyridoxine 5'-phosphate: step 1/1. Functionally, catalyzes the oxidation of either pyridoxine 5'-phosphate (PNP) or pyridoxamine 5'-phosphate (PMP) into pyridoxal 5'-phosphate (PLP). The chain is Pyridoxine/pyridoxamine 5'-phosphate oxidase from Colwellia psychrerythraea (strain 34H / ATCC BAA-681) (Vibrio psychroerythus).